We begin with the raw amino-acid sequence, 372 residues long: NAD(P)H-quinone oxidoreductase subunit 1 (372 aa).

The next 8 membrane-spanning stretches (helical) occupy residues 27 to 47 (IIWLPIPMLLVLVAAVVGVLV), 97 to 117 (ILFTAGPILVLVPVILSWLIV), 128 to 148 (VGIGIFLWIALSSIQPIGLLM), 176 to 196 (LALSVLAIVLMTNSLSTIDIV), 204 to 224 (ILSWNIWRQPVGFIVFWICAL), 266 to 286 (ILSALLVSILYLGGWGFPIPV), 308 to 328 (SIGIVMTVLKAYLLVFIAILL), and 347 to 367 (FLLPISLANLLITAGLKLAFP).

Belongs to the complex I subunit 1 family. In terms of assembly, NDH-1 is composed of at least 11 different subunits.

Its subcellular location is the cellular thylakoid membrane. It carries out the reaction a plastoquinone + NADH + (n+1) H(+)(in) = a plastoquinol + NAD(+) + n H(+)(out). The enzyme catalyses a plastoquinone + NADPH + (n+1) H(+)(in) = a plastoquinol + NADP(+) + n H(+)(out). In terms of biological role, NDH-1 shuttles electrons from an unknown electron donor, via FMN and iron-sulfur (Fe-S) centers, to quinones in the respiratory and/or the photosynthetic chain. The immediate electron acceptor for the enzyme in this species is believed to be plastoquinone. Couples the redox reaction to proton translocation, and thus conserves the redox energy in a proton gradient. This chain is NAD(P)H-quinone oxidoreductase subunit 1, found in Prochlorococcus marinus (strain MIT 9312).